A 344-amino-acid chain; its full sequence is Ras association domain-containing protein 1 (344 aa).

N-acetylserine is present on Ser-2. Ser-2 carries the post-translational modification Phosphoserine. A mediates interaction with E4F1 region spans residues 2-119 (SGEPELIELR…DLGWEPAVER (118 aa)). Residue Arg-36 is modified to Omega-N-methylarginine. The segment at 51–105 (GHRFQPAGPATHTWCDLCGDFIWGVVRKGLQCARLSADCKFTCHYRCRALVCLDC) adopts a Phorbol-ester/DAG-type zinc-finger fold. A compositionally biased stretch (low complexity) spans 179–189 (SVPSSKKPPSL). The segment at 179-203 (SVPSSKKPPSLQDARRGPGRGTSVR) is disordered. Residues 198 to 292 (RGTSVRRRTS…LSFVLKENDS (95 aa)) form the Ras-associating domain. In terms of domain architecture, SARAH spans 294–341 (EVNWDAFSMPELHNFLRILQREEEEHLRQILQKYSYCRQKIQEALHAC). The MOAP1-binding stretch occupies residues 315 to 318 (EEEE).

As to quaternary structure, interacts with MAP1S. Interacts with XPA. Binds to the N-terminal of CDC20 during prometaphase. Binds to STK3/MST2 and STK4/MST1. Recruited to the TNFRSF1A and TNFRSF10A complexes in response to their respective cognate ligand, after internalization. Can self-associate. Part of a complex with MDM2, DAXX, RASSF1 and USP7. Interacts with ECM2. Interacts with MOAP1. Interacts with E4F1. Interacts with RSSF5 and probably associates with HRAS via a RSSF1 isoform A-RSSF5 heterodimer. Interacts (via C-terminus) with DAXX (via N-terminus); the interaction is independent of MDM2 and TP53. Interacts (via N-terminus) with MDM2 (via C-terminus); the interaction is independent of TP53. Interacts with RAB39A. Interacts with RAB39B; the interaction is weak. In terms of assembly, interacts (via N-terminus) with DAXX. Interacts with RAB39B; the interaction is strong. Does not interact with RAB39A. As to quaternary structure, interacts (via N-terminus) with DAXX. As to expression, isoform A and isoform C are ubiquitously expressed in all tissues tested, however isoform A is absent in many corresponding cancer cell lines. Isoform B is mainly expressed in hematopoietic cells.

Its subcellular location is the cytoplasm. It is found in the cytoskeleton. The protein localises to the microtubule organizing center. The protein resides in the centrosome. It localises to the spindle. Its subcellular location is the spindle pole. It is found in the nucleus. Potential tumor suppressor. Required for death receptor-dependent apoptosis. Mediates activation of STK3/MST2 and STK4/MST1 during Fas-induced apoptosis by preventing their dephosphorylation. When associated with MOAP1, promotes BAX conformational change and translocation to mitochondrial membranes in response to TNF and TNFSF10 stimulation. Isoform A interacts with CDC20, an activator of the anaphase-promoting complex, APC, resulting in the inhibition of APC activity and mitotic progression. Inhibits proliferation by negatively regulating cell cycle progression at the level of G1/S-phase transition by regulating accumulation of cyclin D1 protein. Isoform C has been shown not to perform these roles, no function has been identified for this isoform. Isoform A disrupts interactions among MDM2, DAXX and USP7, thus contributing to the efficient activation of TP53 by promoting MDM2 self-ubiquitination in cell-cycle checkpoint control in response to DNA damage. In Homo sapiens (Human), this protein is Ras association domain-containing protein 1.